We begin with the raw amino-acid sequence, 454 residues long: Notoamide E oxidase notB (454 aa).

Residues 15-35 (SPAELTVIIVGLGIAGLTAAI) traverse the membrane as a helical segment. FAD-binding residues include Glu48 and Gly61. Asn75 carries N-linked (GlcNAc...) asparagine glycosylation. Arg121 contributes to the FAD binding site. Catalysis depends on residues Arg199 and Tyr229. Asp322 and Gly335 together coordinate FAD.

It belongs to the paxM FAD-dependent monooxygenase family. The cofactor is FAD.

It is found in the membrane. It carries out the reaction notoamide E + NADPH + O2 + H(+) = notoamide C + NADP(+) + H2O. The enzyme catalyses notoamide E + NADPH + O2 + H(+) = notoamide D + NADP(+) + H2O. The protein operates within alkaloid biosynthesis. Functionally, FAD-dependent monooxygenase; part of the gene cluster that mediates the biosynthesis of notoamide, a fungal indole alkaloid that belongs to a family of natural products containing a characteristic bicyclo[2.2.2]diazaoctane core. The first step of notoamide biosynthesis involves coupling of L-proline and L-tryptophan by the bimodular NRPS notE, to produce cyclo-L-tryptophan-L-proline called brevianamide F. The reverse prenyltransferase notF then acts as a deoxybrevianamide E synthase and converts brevianamide F to deoxybrevianamide E via reverse prenylation at C-2 of the indole ring leading to the bicyclo[2.2.2]diazaoctane core. Deoxybrevianamide E is further hydroxylated at C-6 of the indole ring, likely catalyzed by the cytochrome P450 monooxygenase notG, to yield 6-hydroxy-deoxybrevianamide E. 6-hydroxy-deoxybrevianamide E is a specific substrate of the prenyltransferase notC for normal prenylation at C-7 to produce 6-hydroxy-7-prenyl-deoxybrevianamide, also called notoamide S. As the proposed pivotal branching point in notoamide biosynthesis, notoamide S can be diverted to notoamide E through an oxidative pyran ring closure putatively catalyzed by either notH cytochrome P450 monooxygenase or the notD FAD-linked oxidoreductase. This step would be followed by an indole 2,3-epoxidation-initiated pinacol-like rearrangement catalyzed by the notB FAD-dependent monooxygenase leading to the formation of notoamide C and notoamide D. On the other hand notoamide S is converted to notoamide T by notH (or notD), a bifunctional oxidase that also functions as the intramolecular Diels-Alderase responsible for generation of (+)-notoamide T. To generate antipodal (-)-notoaminide T, notH' (or notD') in Aspergillus versicolor is expected to catalyze a Diels-Alder reaction leading to the opposite stereochemistry. The remaining oxidoreductase notD (or notH) likely catalyzes the oxidative pyran ring formation to yield (+)-stephacidin A. The FAD-dependent monooxygenase notI is highly similar to notB and is predicted to catalyze a similar conversion from (+)-stephacidin A to (-)-notoamide B via the 2,3-epoxidation of (+)-stephacidin A followed by a pinacol-type rearrangement. Finally, it remains unclear which enzyme could be responsible for the final hydroxylation steps leading to notoamide A and sclerotiamide. In Aspergillus sp. (strain MF297-2), this protein is Notoamide E oxidase notB.